Consider the following 49-residue polypeptide: Large ribosomal subunit protein bL33 (49 aa).

This sequence belongs to the bacterial ribosomal protein bL33 family.

This chain is Large ribosomal subunit protein bL33, found in Syntrophobacter fumaroxidans (strain DSM 10017 / MPOB).